The primary structure comprises 370 residues: Cysteine synthase 1 (370 aa).

Residues 1–16 constitute a mitochondrion transit peptide; the sequence is MFRQSVRRFATAALRS. Position 73 is an N6-(pyridoxal phosphate)lysine (K73). Pyridoxal 5'-phosphate contacts are provided by residues N103, 209–213, and S308; that span reads GTGGT.

It belongs to the cysteine synthase/cystathionine beta-synthase family. The cofactor is pyridoxal 5'-phosphate.

The protein resides in the mitochondrion. The enzyme catalyses O-succinyl-L-serine + hydrogen sulfide = L-cysteine + succinate. The catalysed reaction is O-acetyl-L-serine + hydrogen sulfide = L-cysteine + acetate. It functions in the pathway amino-acid biosynthesis; L-cysteine biosynthesis; L-cysteine from L-serine: step 2/2. Its function is as follows. Catalyzes the conversion of O-succinyl-L-serine into cysteine, the last step in the cysteine biosynthesis pathway. Can also use O-acetyl-L-serine. The chain is Cysteine synthase 1 from Emericella nidulans (strain FGSC A4 / ATCC 38163 / CBS 112.46 / NRRL 194 / M139) (Aspergillus nidulans).